We begin with the raw amino-acid sequence, 418 residues long: IQ domain-containing protein C (418 aa).

An IQ domain is found at 6 to 35; the sequence is FLRKVSTLQAGFRGFLVRRQFQSLRAEYEA. Disordered stretches follow at residues 101–142, 230–264, 280–299, 327–355, and 376–418; these read QKKT…SVSK, HHAEDSSHKGRLKPQKHPDSVTSAGKTTAGSKGRE, SQAGGDRVTKGPDHGGQPFK, AETQLPTLSENQNIEDRYSRKPSRSAGPC, and GSLD…LQWR. Composition is skewed to polar residues over residues 129-142 and 249-259; these read KASQGNSQDTSVSK and SVTSAGKTTAG. A coiled-coil region spans residues 141–176; that stretch reads SKMENADLGLSQSQQELQEQRNHLAMELLWLQQAIN. The span at 390 to 404 shows a compositional bias: polar residues; sequence PPSAGSSGHGNTSEL.

This is IQ domain-containing protein C (Iqcc) from Mus musculus (Mouse).